The sequence spans 387 residues: Sharpin (387 aa).

Positions 1–180 (MAPPAGGAAA…EREELAGSLA (180 aa)) are self-association. Over residues 122-132 (EGQNGSKSNSP) the composition is skewed to polar residues. The segment at 122-169 (EGQNGSKSNSPPALGPEACPVSLPSPPEASTLKGPPPEADLPRSPGNL) is disordered. The residue at position 165 (Ser165) is a Phosphoserine. Positions 175-310 (LAGSLARAIA…SAPREAPATG (136 aa)) are interaction with SHANK1. Residues 219-288 (IRLQVTLEDA…PERSLASYGV (70 aa)) enclose the Ubiquitin-like domain. The tract at residues 305–349 (EAPATGPSPQHPQKMDGELGRLFPPSLGLPPGPQPAASSLPSPLQ) is disordered. Ser312 carries the phosphoserine modification. Over residues 339–349 (PAASSLPSPLQ) the composition is skewed to low complexity. The RanBP2-type zinc finger occupies 348–377 (LQPSWSCPSCTFINAPDRPGCEMCSTQRPC).

In terms of assembly, monomer and homodimer. Component of the LUBAC complex (linear ubiquitin chain assembly complex) which consists of SHARPIN, RBCK1 and RNF31. LUBAC has a MW of approximately 600 kDa suggesting a heteromultimeric assembly of its subunits. Associates with the TNF-R1 signaling complex (TNF-RSC) in a stimulation-dependent manner. Interacts with EYA1, EYA2, SHANK1 and SHANK3 (via ANK repeats). Highly expressed in skeletal muscle and placenta and at lower levels in brain, heart, colon without mucosa, thymus, spleen, kidney, liver, small intestine, lung and peripheral blood leukocytes. Up-regulated in various tumor tissues such as kidney, liver, ovary and pancreas tumors.

It localises to the cytoplasm. Its subcellular location is the cytosol. The protein resides in the synapse. It functions in the pathway protein modification; protein ubiquitination. Functionally, component of the LUBAC complex which conjugates linear polyubiquitin chains in a head-to-tail manner to substrates and plays a key role in NF-kappa-B activation and regulation of inflammation. LUBAC conjugates linear polyubiquitin to IKBKG and RIPK1 and is involved in activation of the canonical NF-kappa-B and the JNK signaling pathways. Linear ubiquitination mediated by the LUBAC complex interferes with TNF-induced cell death and thereby prevents inflammation. LUBAC is recruited to the TNF-R1 signaling complex (TNF-RSC) following polyubiquitination of TNF-RSC components by BIRC2 and/or BIRC3 and to conjugate linear polyubiquitin to IKBKG and possibly other components contributing to the stability of the complex. The LUBAC complex is also involved in innate immunity by conjugating linear polyubiquitin chains at the surface of bacteria invading the cytosol to form the ubiquitin coat surrounding bacteria. LUBAC is not able to initiate formation of the bacterial ubiquitin coat, and can only promote formation of linear polyubiquitins on pre-existing ubiquitin. The bacterial ubiquitin coat acts as an 'eat-me' signal for xenophagy and promotes NF-kappa-B activation. Together with OTULIN, the LUBAC complex regulates the canonical Wnt signaling during angiogenesis. In Homo sapiens (Human), this protein is Sharpin.